Here is a 528-residue protein sequence, read N- to C-terminus: Alpha-amylase (528 aa).

Positions 1–28 (MNKKWLNIPALIALLAAIAFGSVAPAEA) are cleaved as a signal peptide. Ca(2+) contacts are provided by Asn-168 and Asp-228. Residue Asp-258 is the Nucleophile of the active site. His-262 is a binding site for Ca(2+). Catalysis depends on Glu-286, which acts as the Proton donor.

Belongs to the glycosyl hydrolase 13 family. As to quaternary structure, monomer. Requires Ca(2+) as cofactor.

The catalysed reaction is Endohydrolysis of (1-&gt;4)-alpha-D-glucosidic linkages in polysaccharides containing three or more (1-&gt;4)-alpha-linked D-glucose units.. This is Alpha-amylase from Niallia circulans (Bacillus circulans).